The following is a 153-amino-acid chain: 3-hydroxyacyl-[acyl-carrier-protein] dehydratase FabZ (153 aa).

Histidine 54 is a catalytic residue.

It belongs to the thioester dehydratase family. FabZ subfamily.

The protein resides in the cytoplasm. The catalysed reaction is a (3R)-hydroxyacyl-[ACP] = a (2E)-enoyl-[ACP] + H2O. Involved in unsaturated fatty acids biosynthesis. Catalyzes the dehydration of short chain beta-hydroxyacyl-ACPs and long chain saturated and unsaturated beta-hydroxyacyl-ACPs. In Chlamydia muridarum (strain MoPn / Nigg), this protein is 3-hydroxyacyl-[acyl-carrier-protein] dehydratase FabZ.